Here is a 465-residue protein sequence, read N- to C-terminus: UDP-N-acetylmuramoylalanine--D-glutamate ligase (465 aa).

116-122 is a binding site for ATP; it reads GTNGKTT.

The protein belongs to the MurCDEF family.

The protein resides in the cytoplasm. It carries out the reaction UDP-N-acetyl-alpha-D-muramoyl-L-alanine + D-glutamate + ATP = UDP-N-acetyl-alpha-D-muramoyl-L-alanyl-D-glutamate + ADP + phosphate + H(+). It functions in the pathway cell wall biogenesis; peptidoglycan biosynthesis. Cell wall formation. Catalyzes the addition of glutamate to the nucleotide precursor UDP-N-acetylmuramoyl-L-alanine (UMA). This Thermobifida fusca (strain YX) protein is UDP-N-acetylmuramoylalanine--D-glutamate ligase.